A 957-amino-acid chain; its full sequence is Glycine dehydrogenase (decarboxylating) (957 aa).

At Lys-708 the chain carries N6-(pyridoxal phosphate)lysine.

It belongs to the GcvP family. In terms of assembly, the glycine cleavage system is composed of four proteins: P, T, L and H. Requires pyridoxal 5'-phosphate as cofactor.

It carries out the reaction N(6)-[(R)-lipoyl]-L-lysyl-[glycine-cleavage complex H protein] + glycine + H(+) = N(6)-[(R)-S(8)-aminomethyldihydrolipoyl]-L-lysyl-[glycine-cleavage complex H protein] + CO2. Functionally, the glycine cleavage system catalyzes the degradation of glycine. The P protein binds the alpha-amino group of glycine through its pyridoxal phosphate cofactor; CO(2) is released and the remaining methylamine moiety is then transferred to the lipoamide cofactor of the H protein. In Salmonella dublin (strain CT_02021853), this protein is Glycine dehydrogenase (decarboxylating).